Here is an 881-residue protein sequence, read N- to C-terminus: Alanine--tRNA ligase (881 aa).

Zn(2+)-binding residues include H566, H570, C668, and H672.

It belongs to the class-II aminoacyl-tRNA synthetase family. It depends on Zn(2+) as a cofactor.

The protein localises to the cytoplasm. It carries out the reaction tRNA(Ala) + L-alanine + ATP = L-alanyl-tRNA(Ala) + AMP + diphosphate. Catalyzes the attachment of alanine to tRNA(Ala) in a two-step reaction: alanine is first activated by ATP to form Ala-AMP and then transferred to the acceptor end of tRNA(Ala). Also edits incorrectly charged Ser-tRNA(Ala) and Gly-tRNA(Ala) via its editing domain. The polypeptide is Alanine--tRNA ligase (Frankia casuarinae (strain DSM 45818 / CECT 9043 / HFP020203 / CcI3)).